The primary structure comprises 203 residues: Superoxide dismutase [Mn] (203 aa).

Mn(2+) contacts are provided by H27, H81, D164, and H168.

Belongs to the iron/manganese superoxide dismutase family. In terms of assembly, homodimer. It depends on Mn(2+) as a cofactor.

The enzyme catalyses 2 superoxide + 2 H(+) = H2O2 + O2. Functionally, destroys superoxide anion radicals which are normally produced within the cells and which are toxic to biological systems. Partially complements double sodA-sodB deletions in E.coli. This chain is Superoxide dismutase [Mn], found in Pseudomonas aeruginosa (strain ATCC 15692 / DSM 22644 / CIP 104116 / JCM 14847 / LMG 12228 / 1C / PRS 101 / PAO1).